Consider the following 869-residue polypeptide: MQEKYHPQEIERQARQSWQETNIFNVTEIPDRPKYYCLSMFPYPSGKLHMGHVRNYTIGDVLSRYRRMQGYNVMQPMGWDAFGLPAENAAIQKGVPPAKWTYDNIAYMRSQLQSLGFAIDWQRELATCDPQYYRWNQWLFLRMLEKGIAYQKTQVVNWDPVDQTVLANEQVIDGCGWRTGAVVEKREIPGYYLAITRYADELLADLEKLPGWPERVKTMQANWIGKSFGVDITFPPDTASGMPQALKVFTTRADTLMGVTYVAVAAEHPVALHAAHNQPDLVAFIESCRQGATMEAELAVQEKKGMATGLYVLHPLTGERLPVWVANYVLMSYGEGAVMAVPAHDERDFDFARQHSLPIKPVIRPENGELSVPLVQAFTEYGVTFNSDRFSDLTSPEAIDAIAVELGQKALGEKRVRYRLRDWGISRQRYWGCPIPLIHCDSCGVVPVADDQLPVVLPEDLVPDGSGNPLAKTPSFYECTCPRCGRQARRETDTMDTFVDSSWYFIRYACPDQSAAMTDQRANYWLPVDQYIGGIEHAILHLLYSRFWSKVMRDLGLVSFDEPFANLLTQGMVLNEIFFRKTSSGRIQYFNPAEVDVQHDGEGKRVGAVLQADNQPVESGGIGTMSKSKNNGIDPQEIIEQYGADTARLFMMFASPPTQTLEWSDAGVEGAFRFLKRLWRQVYLHRQLDGEAAATTTLVPHQEYPADLRDLRCQLHQTIVKVTDDLERRHTFNTAIAAIMELMNELSDVQGTHPAARQLMQEALENIVLLLSPIVPHICHVLWRELRPGTELLDQPWPQADDQALIQDEVEIVVQINGKLRGQIRIAREADRAAVERTALQDEHIQKSIAYRPVKRVIVVPGKLINIVV.

The 'HIGH' region signature appears at Pro-42–His-52. Residues Thr-624–Ser-628 carry the 'KMSKS' region motif. Residue Lys-627 participates in ATP binding.

It belongs to the class-I aminoacyl-tRNA synthetase family.

It is found in the cytoplasm. The enzyme catalyses tRNA(Leu) + L-leucine + ATP = L-leucyl-tRNA(Leu) + AMP + diphosphate. The protein is Leucine--tRNA ligase of Nitrosomonas europaea (strain ATCC 19718 / CIP 103999 / KCTC 2705 / NBRC 14298).